The chain runs to 85 residues: Large ribosomal subunit protein bL27 (85 aa).

Positions 1 to 21 (MAHKKGVGSTRNGRDSESKRL) are disordered.

Belongs to the bacterial ribosomal protein bL27 family.

The protein is Large ribosomal subunit protein bL27 of Geobacter sulfurreducens (strain ATCC 51573 / DSM 12127 / PCA).